The following is a 290-amino-acid chain: MLTEDPVSEICEAKAVDELAEQEKNYYCQRCLNHGELKPRKGHKPDCRYLKCPCRECTMVEQRRQLNNLLSKKKIHCTPATQTRDGKRVRDPHCARCSAHGVLVPLRGHKRTMCQFVTCECTLCTLVEHRRNLMAAQIKLRRSQQKSRDGKEPKRNSRRKSKDMDMEMMVVTATDGQKIIGTSASPSPSSTTDTMSPSLSMSPPCSPSPLLAQYTLTLAAPIPIYPPIPMNQQLISLQQQQFLMSIIQNMAPSIGQQAPLLPGISAGSVSSAAILNEFWSMYLKNYGLQA.

DNA-binding regions (DM) lie at residues 28–74 (CQRC…SKKK) and 94–142 (CARC…KLRR). 2 disordered regions span residues 139 to 167 (KLRRSQQKSRDGKEPKRNSRRKSKDMDME) and 179 to 202 (IIGTSASPSPSSTTDTMSPSLSMS). Residues 146–155 (KSRDGKEPKR) are compositionally biased toward basic and acidic residues. Positions 182–202 (TSASPSPSSTTDTMSPSLSMS) are enriched in low complexity.

As to expression, expression is undetectable in hermaphrodites, but persists in males. In males, expressed in cells of the tail tip.

The protein localises to the nucleus. Functionally, transcription factor which binds the DNA motif 5'-[CGA][TCA][TA]ACAATGT[AT][TGA]C-3', probably as a monomer. Acts partially redundantly with the transcription factor dmd-3 to coordinate tail tip cell fusion and retraction and thereby regulate male tail tip morphogenesis. Promotes male-specific development of two tissues, the peripheral nervous system and the intestine. In the peripheral nervous system, directs differentiation of sensory ray neuroblasts into peripheral sense organs. In the intestine, causes repression of vitellogenin gene transcription. The protein is Protein male abnormal 3 of Caenorhabditis elegans.